Reading from the N-terminus, the 910-residue chain is Protein translocase subunit SecA (910 aa).

ATP contacts are provided by residues Gln89, 107–111 (GEGKT), and Asp502. Zn(2+)-binding residues include Cys894, Cys896, Cys905, and His906.

This sequence belongs to the SecA family. As to quaternary structure, monomer and homodimer. Part of the essential Sec protein translocation apparatus which comprises SecA, SecYEG and auxiliary proteins SecDF-YajC and YidC. It depends on Zn(2+) as a cofactor.

It localises to the cell inner membrane. The protein localises to the cytoplasm. The enzyme catalyses ATP + H2O + cellular proteinSide 1 = ADP + phosphate + cellular proteinSide 2.. Functionally, part of the Sec protein translocase complex. Interacts with the SecYEG preprotein conducting channel. Has a central role in coupling the hydrolysis of ATP to the transfer of proteins into and across the cell membrane, serving both as a receptor for the preprotein-SecB complex and as an ATP-driven molecular motor driving the stepwise translocation of polypeptide chains across the membrane. This chain is Protein translocase subunit SecA, found in Mesorhizobium japonicum (strain LMG 29417 / CECT 9101 / MAFF 303099) (Mesorhizobium loti (strain MAFF 303099)).